The primary structure comprises 310 residues: Dehydrodolichyl diphosphate synthase 2 (310 aa).

Belongs to the UPP synthase family. The cofactor is Mg(2+).

It participates in protein modification; protein glycosylation. Its function is as follows. Catalyzes cis-prenyl chain elongation to produce the polyprenyl backbone of dolichol, a glycosyl carrier-lipid required for the biosynthesis of several classes of glycoprotein. This Arabidopsis thaliana (Mouse-ear cress) protein is Dehydrodolichyl diphosphate synthase 2.